A 502-amino-acid chain; its full sequence is ATP synthase subunit alpha (502 aa).

169-176 (GDRQTGKT) contacts ATP.

This sequence belongs to the ATPase alpha/beta chains family. F-type ATPases have 2 components, CF(1) - the catalytic core - and CF(0) - the membrane proton channel. CF(1) has five subunits: alpha(3), beta(3), gamma(1), delta(1), epsilon(1). CF(0) has three main subunits: a(1), b(2) and c(9-12). The alpha and beta chains form an alternating ring which encloses part of the gamma chain. CF(1) is attached to CF(0) by a central stalk formed by the gamma and epsilon chains, while a peripheral stalk is formed by the delta and b chains.

It is found in the cell inner membrane. The enzyme catalyses ATP + H2O + 4 H(+)(in) = ADP + phosphate + 5 H(+)(out). Its function is as follows. Produces ATP from ADP in the presence of a proton gradient across the membrane. The alpha chain is a regulatory subunit. The chain is ATP synthase subunit alpha from Geotalea uraniireducens (strain Rf4) (Geobacter uraniireducens).